Here is a 427-residue protein sequence, read N- to C-terminus: Enolase (427 aa).

(2R)-2-phosphoglycerate is bound at residue Gln163. Glu205 (proton donor) is an active-site residue. Mg(2+) is bound by residues Asp242, Glu285, and Asp312. The (2R)-2-phosphoglycerate site is built by Lys337, Arg366, Ser367, and Lys388. Lys337 serves as the catalytic Proton acceptor.

It belongs to the enolase family. The cofactor is Mg(2+).

The protein resides in the cytoplasm. It localises to the secreted. Its subcellular location is the cell surface. It carries out the reaction (2R)-2-phosphoglycerate = phosphoenolpyruvate + H2O. It participates in carbohydrate degradation; glycolysis; pyruvate from D-glyceraldehyde 3-phosphate: step 4/5. Its function is as follows. Catalyzes the reversible conversion of 2-phosphoglycerate (2-PG) into phosphoenolpyruvate (PEP). It is essential for the degradation of carbohydrates via glycolysis. The polypeptide is Enolase (Burkholderia lata (strain ATCC 17760 / DSM 23089 / LMG 22485 / NCIMB 9086 / R18194 / 383)).